Reading from the N-terminus, the 221-residue chain is Glycerol metabolism activator (221 aa).

Positions 3–120 constitute a Response regulatory domain; it reads KILIADDHPL…QMTDAIEQIL (118 aa). Position 55 is a 4-aspartylphosphate (Asp-55). The HTH luxR-type domain occupies 149–214; it reads APELLQALTR…QAILSAGDID (66 aa). A DNA-binding region (H-T-H motif) is located at residues 173–192; the sequence is NKQIAYNLDIAETTVKAHVS.

Its function is as follows. Positive activator for glycerol metabolism. Regulates the expression of qedA in a positive manner and governs the expression of ADH I and ADH IIB. General regulator of quinoprotein ethanol oxidation and affects expression of ADH IIG activity but is not the sole regulator. This chain is Glycerol metabolism activator, found in Pseudomonas putida (Arthrobacter siderocapsulatus).